We begin with the raw amino-acid sequence, 423 residues long: Autophagy-related protein 18 (423 aa).

WD repeat units lie at residues 200–240 (AHKT…KLWQ) and 245–284 (SSSA…KGGK). The L/FRRG motif motif lies at 241-245 (FRRGS). Positions 281-317 (KGGKDADDASTEEARSPTPSETPLASSPPLAAGKLDS) are disordered. Residues 282-295 (GGKDADDASTEEAR) show a composition bias toward basic and acidic residues.

It belongs to the WD repeat PROPPIN family. In terms of assembly, component of the PI(3,5)P2 regulatory complex.

Its subcellular location is the preautophagosomal structure membrane. The protein resides in the vacuole membrane. It localises to the endosome membrane. The PI(3,5)P2 regulatory complex regulates both the synthesis and turnover of phosphatidylinositol 3,5-bisphosphate (PtdIns(3,5)P2). Necessary for proper vacuole morphology. Plays an important role in osmotically-induced vacuole fragmentation. Required for cytoplasm to vacuole transport (Cvt) vesicle formation, pexophagy and starvation-induced autophagy. Involved in correct ATG9 trafficking to the pre-autophagosomal structure. Might also be involved in premeiotic DNA replication. The protein is Autophagy-related protein 18 (ATG18) of Cryptococcus neoformans var. neoformans serotype D (strain JEC21 / ATCC MYA-565) (Filobasidiella neoformans).